Reading from the N-terminus, the 728-residue chain is Phosphoribosylformylglycinamidine synthase subunit PurL (728 aa).

His40 is an active-site residue. Residues Tyr43 and Lys82 each contribute to the ATP site. A Mg(2+)-binding site is contributed by Glu84. Substrate is bound by residues 85–88 (SHNH) and Arg107. The active-site Proton acceptor is the His86. Asp108 provides a ligand contact to Mg(2+). Gln231 contributes to the substrate binding site. Asp259 lines the Mg(2+) pocket. 303-305 (ESQ) contacts substrate. ATP is bound by residues Asn483 and Gly520. Asn521 contacts Mg(2+). Ser523 serves as a coordination point for substrate.

This sequence belongs to the FGAMS family. Monomer. Part of the FGAM synthase complex composed of 1 PurL, 1 PurQ and 2 PurS subunits.

The protein localises to the cytoplasm. It catalyses the reaction N(2)-formyl-N(1)-(5-phospho-beta-D-ribosyl)glycinamide + L-glutamine + ATP + H2O = 2-formamido-N(1)-(5-O-phospho-beta-D-ribosyl)acetamidine + L-glutamate + ADP + phosphate + H(+). It functions in the pathway purine metabolism; IMP biosynthesis via de novo pathway; 5-amino-1-(5-phospho-D-ribosyl)imidazole from N(2)-formyl-N(1)-(5-phospho-D-ribosyl)glycinamide: step 1/2. Part of the phosphoribosylformylglycinamidine synthase complex involved in the purines biosynthetic pathway. Catalyzes the ATP-dependent conversion of formylglycinamide ribonucleotide (FGAR) and glutamine to yield formylglycinamidine ribonucleotide (FGAM) and glutamate. The FGAM synthase complex is composed of three subunits. PurQ produces an ammonia molecule by converting glutamine to glutamate. PurL transfers the ammonia molecule to FGAR to form FGAM in an ATP-dependent manner. PurS interacts with PurQ and PurL and is thought to assist in the transfer of the ammonia molecule from PurQ to PurL. In Carboxydothermus hydrogenoformans (strain ATCC BAA-161 / DSM 6008 / Z-2901), this protein is Phosphoribosylformylglycinamidine synthase subunit PurL.